The primary structure comprises 4579 residues: Sacsin (4579 aa).

One can recognise a Ubiquitin-like domain in the interval 9 to 84 (VPVTVLPGCV…FVNLQSKGLK (76 aa)). At lysine 943 the chain carries N6-acetyllysine. A phosphoserine mark is found at serine 1779 and serine 2511. Threonine 2516 is subject to Phosphothreonine. Phosphoserine is present on serine 3435. Disordered stretches follow at residues 4248–4273 (PEES…TPGL) and 4279–4298 (LFSG…PKKL). Over residues 4254 to 4267 (SRDSAPSTPTSPTE) the composition is skewed to polar residues. Threonine 4261 bears the Phosphothreonine mark. At serine 4264 the chain carries Phosphoserine. Positions 4288–4298 (TSSKHQSPKKL) are enriched in basic residues. In terms of domain architecture, J spans 4306 to 4393 (ILKEVTSVVE…ASRFQSDKYS (88 aa)). The interval 4405–4427 (ATSHKSERQQQNKEKCPPSAGQT) is disordered. Basic and acidic residues predominate over residues 4406 to 4420 (TSHKSERQQQNKEKC). The HEPN domain occupies 4451 to 4567 (LRQARANFSA…MRVMECTACI (117 aa)).

As to expression, highly expressed in the central nervous system. Also found in skeletal muscle and at low levels in pancreas.

It localises to the cytoplasm. Co-chaperone which acts as a regulator of the Hsp70 chaperone machinery and may be involved in the processing of other ataxia-linked proteins. In Homo sapiens (Human), this protein is Sacsin (SACS).